The sequence spans 464 residues: Protein FAM90A1 (464 aa).

Disordered stretches follow at residues 1–43, 71–294, 312–386, 412–437, and 445–464; these read MMAR…PRLK, PNFG…KRSA, PFQI…AASH, PSFH…SEGP, and VLYE…SDLE. 2 stretches are compositionally biased toward basic and acidic residues: residues 74–83 and 97–114; these read GEKEGKENLK and NKDK…DPQR. Residues 180–197 show a composition bias toward low complexity; that stretch reads LASLSPLRKASLSSSSSL. The segment covering 344–355 has biased composition (polar residues); that stretch reads TSPQTGTRTPAQ.

This sequence belongs to the FAM90 family.

The chain is Protein FAM90A1 (FAM90A1) from Homo sapiens (Human).